We begin with the raw amino-acid sequence, 591 residues long: Cytidine monophosphate-N-acetylneuraminic acid hydroxylase (591 aa).

Residues leucine 12 to leucine 110 enclose the Rieske domain. Residues cysteine 52, histidine 54, cysteine 73, and histidine 76 each coordinate [2Fe-2S] cluster.

It belongs to the CMP-Neu5Ac hydroxylase family. [2Fe-2S] cluster serves as cofactor.

The protein resides in the cytoplasm. The catalysed reaction is CMP-N-acetyl-beta-neuraminate + 2 Fe(II)-[cytochrome b5] + O2 + 2 H(+) = CMP-N-glycoloyl-beta-neuraminate + 2 Fe(III)-[cytochrome b5] + H2O. It participates in amino-sugar metabolism; N-acetylneuraminate metabolism. Sialic acids are components of carbohydrate chains of glycoconjugates and are involved in cell-cell recognition and cell-pathogen interactions. Catalyzes the conversion of CMP-N-acetylneuraminic acid (CMP-Neu5Ac) into its hydroxylated derivative CMP-N-glycolylneuraminic acid (CMP-Neu5Gc), a sialic acid abundantly expressed at the surface of many cells. In Danio rerio (Zebrafish), this protein is Cytidine monophosphate-N-acetylneuraminic acid hydroxylase (cmah).